The primary structure comprises 377 residues: Mitogen-activated protein kinase pmk-1 (377 aa).

The Protein kinase domain maps to 35–319 (YINLTPIGTG…AKEAMEHEYL (285 aa)). ATP-binding positions include 41 to 49 (IGTGAYGTV) and Lys64. Catalysis depends on Asp179, which acts as the Proton acceptor. Thr191 carries the phosphothreonine modification. The TXY motif lies at 191–193 (TGY). A Phosphotyrosine modification is found at Tyr193.

This sequence belongs to the protein kinase superfamily. CMGC Ser/Thr protein kinase family. MAP kinase subfamily. Interacts with transcription factor atf-7; perhaps in a manner dependent on dual specificity protein kinase sek-1. Mg(2+) serves as cofactor. Mn(2+) is required as a cofactor. Dually phosphorylated on Thr-191 and Tyr-193, probably by sek-1, which activates the enzyme. Increased phosphorylation in response to the heavy metal arsenite. Increased phosphorylation in response to intestinal colonization by probiotic Lactobacillus fermentum strain JDFM216. As to expression, expressed in intestinal cells.

The protein resides in the nucleus. It catalyses the reaction L-seryl-[protein] + ATP = O-phospho-L-seryl-[protein] + ADP + H(+). The catalysed reaction is L-threonyl-[protein] + ATP = O-phospho-L-threonyl-[protein] + ADP + H(+). Activated by phosphorylation on threonine and tyrosine. Inhibited by pyridinyl-imidazole related compounds. Functionally, serine/threonine kinase which responds to activation by environmental stress and pro-inflammatory cytokines by phosphorylating downstream targets. As part of a MAP kinase signaling pathway, plays a role in modulation of lifespan and immunity. Phosphorylates skn-1 which probably regulates skn-1 nuclear translocation in response to oxidative stress. Probably by activating skn-1, involved in the up-regulation of gcs-1 and glutathione-S-transferase gst-4 expression upon bacteria infection. Up-regulates expression of gcs-1 in intestinal cells upon arsenite treatment. Functions downstream of the MAPKK sek-1 and the MAPKKK nsy-1 as the MAP kinase which regulates pathogen resistance and responses to oxidative stress. Required for expression of antimicrobial peptide nlp-29 in response to fungal infection or physical injury. Involved in resistance to the nematotoxic C.cinerea galectin (Cgl2). May play a redundant role with other MAP kinases in susceptibility to anoxia, downstream of tir-1/nsy-1. Phosphorylates transcription factor rnt-1 during oxidative stress which results in rnt-1 stabilization in the intestine. Phosphorylates transcription factor atf-7 during pathogen infection resulting in modulation of target genes. Probably downstream of nsy-1 and sek-1, involved in germline apoptosis induced by heavy metals, such as Cu(2+). Regulates the basal expression of immune effector genes including irg-4, irg-5, mul-1 and drd-50. The sequence is that of Mitogen-activated protein kinase pmk-1 from Caenorhabditis elegans.